We begin with the raw amino-acid sequence, 1238 residues long: Protein translocase subunit SecA 1 (1238 aa).

Residues Q107, 125–129, and D570 contribute to the ATP site; that span reads GEGKT. The interval 1194-1220 is disordered; it reads AAGSEGRAEGSVDTVRVEEPRIGRNAP. The segment covering 1199–1215 has biased composition (basic and acidic residues); sequence GRAEGSVDTVRVEEPRI. 4 residues coordinate Zn(2+): C1221, C1223, C1232, and C1233.

The protein belongs to the SecA family. Monomer and homodimer. Part of the essential Sec protein translocation apparatus which comprises SecA, SecYEG and auxiliary proteins SecDF. Other proteins may also be involved. The cofactor is Zn(2+).

The protein resides in the cell inner membrane. The protein localises to the cytoplasm. It catalyses the reaction ATP + H2O + cellular proteinSide 1 = ADP + phosphate + cellular proteinSide 2.. Part of the Sec protein translocase complex. Interacts with the SecYEG preprotein conducting channel. Has a central role in coupling the hydrolysis of ATP to the transfer of proteins into and across the cell membrane, serving as an ATP-driven molecular motor driving the stepwise translocation of polypeptide chains across the membrane. The protein is Protein translocase subunit SecA 1 of Rhodopirellula baltica (strain DSM 10527 / NCIMB 13988 / SH1).